Here is a 20-residue protein sequence, read N- to C-terminus: Unknown protein from 2D-PAGE of needles (20 aa).

In Pinus pinaster (Maritime pine), this protein is Unknown protein from 2D-PAGE of needles.